Reading from the N-terminus, the 588-residue chain is Adenine deaminase (588 aa).

It belongs to the metallo-dependent hydrolases superfamily. Adenine deaminase family. Homodimer. Mn(2+) serves as cofactor.

It catalyses the reaction adenine + H2O + H(+) = hypoxanthine + NH4(+). The sequence is that of Adenine deaminase from Escherichia coli (strain SMS-3-5 / SECEC).